The primary structure comprises 537 residues: Probable E3 ubiquitin-protein ligase ARI3 (537 aa).

The disordered stretch occupies residues 1 to 30; sequence MDDDYMMLDDDYGEEEDENYSEDDNYSEAE. Residues 117–331 form a TRIAD supradomain region; sequence KTMKCDVCME…IAGHSCGRYK (215 aa). Residues C121, C124, C139, H141, C144, C147, C166, C171, C210, C216, C234, C236, C241, C244, H249, C254, C281, and C284 each contribute to the Zn(2+) site. The segment at 121-171 adopts an RING-type 1 zinc-finger fold; sequence CDVCMEDDLPSNVMTRMECGHRFCNDCWIGHFTVKINEGESKRILCMAHEC. The segment at 190 to 254 adopts an IBR-type zinc-finger fold; sequence DRYDRFLIES…LSESHSPCSC (65 aa). An RING-type 2; atypical zinc finger spans residues 281-309; it reads CPKCSKPIQKRDGCNLMTCKCGQHFCWLC. The active site involves C294. Zn(2+) is bound by residues C299, C301, C306, C309, H317, and C327.

Belongs to the RBR family. Ariadne subfamily. It depends on Zn(2+) as a cofactor. Ubiquitous.

The enzyme catalyses [E2 ubiquitin-conjugating enzyme]-S-ubiquitinyl-L-cysteine + [acceptor protein]-L-lysine = [E2 ubiquitin-conjugating enzyme]-L-cysteine + [acceptor protein]-N(6)-ubiquitinyl-L-lysine.. Its pathway is protein modification; protein ubiquitination. Functionally, might act as an E3 ubiquitin-protein ligase, or as part of E3 complex, which accepts ubiquitin from specific E2 ubiquitin-conjugating enzymes and then transfers it to substrates. The protein is Probable E3 ubiquitin-protein ligase ARI3 (ARI3) of Arabidopsis thaliana (Mouse-ear cress).